The primary structure comprises 158 residues: 6,7-dimethyl-8-ribityllumazine synthase (158 aa).

Residues phenylalanine 22, 56–58 (ALE), and 80–82 (VVI) each bind 5-amino-6-(D-ribitylamino)uracil. A (2S)-2-hydroxy-3-oxobutyl phosphate-binding site is contributed by 85-86 (ET). The active-site Proton donor is histidine 88. Asparagine 113 serves as a coordination point for 5-amino-6-(D-ribitylamino)uracil. A (2S)-2-hydroxy-3-oxobutyl phosphate-binding site is contributed by arginine 127.

Belongs to the DMRL synthase family.

It carries out the reaction (2S)-2-hydroxy-3-oxobutyl phosphate + 5-amino-6-(D-ribitylamino)uracil = 6,7-dimethyl-8-(1-D-ribityl)lumazine + phosphate + 2 H2O + H(+). It functions in the pathway cofactor biosynthesis; riboflavin biosynthesis; riboflavin from 2-hydroxy-3-oxobutyl phosphate and 5-amino-6-(D-ribitylamino)uracil: step 1/2. Its function is as follows. Catalyzes the formation of 6,7-dimethyl-8-ribityllumazine by condensation of 5-amino-6-(D-ribitylamino)uracil with 3,4-dihydroxy-2-butanone 4-phosphate. This is the penultimate step in the biosynthesis of riboflavin. This is 6,7-dimethyl-8-ribityllumazine synthase from Neisseria meningitidis serogroup C / serotype 2a (strain ATCC 700532 / DSM 15464 / FAM18).